Consider the following 185-residue polypeptide: Cytidylate kinase (185 aa).

G8–T16 lines the ATP pocket.

It belongs to the cytidylate kinase family. Type 2 subfamily.

It is found in the cytoplasm. The catalysed reaction is CMP + ATP = CDP + ADP. It catalyses the reaction dCMP + ATP = dCDP + ADP. The chain is Cytidylate kinase from Desulfurococcus amylolyticus (strain DSM 18924 / JCM 16383 / VKM B-2413 / 1221n) (Desulfurococcus kamchatkensis).